The chain runs to 505 residues: Lysine--tRNA ligase 1 (505 aa).

Residues Asp415 and Glu422 each contribute to the Mg(2+) site.

Belongs to the class-II aminoacyl-tRNA synthetase family. In terms of assembly, homodimer. Mg(2+) is required as a cofactor.

Its subcellular location is the cytoplasm. It catalyses the reaction tRNA(Lys) + L-lysine + ATP = L-lysyl-tRNA(Lys) + AMP + diphosphate. The protein is Lysine--tRNA ligase 1 (lysS1) of Mycobacterium bovis (strain ATCC BAA-935 / AF2122/97).